The sequence spans 596 residues: Fumarate reductase (cytochrome) (596 aa).

Positions 1-25 are cleaved as a signal peptide; the sequence is MKKMNLAVCIATLMGTAGLMGTAVA. Positions 33, 39, 42, 43, 61, 64, 65, 83, 86, 93, 96, 97, 99, 100, 107, 110, and 111 each coordinate heme c. A flavoprotein-like region spans residues 143-596; sequence ALASAPHDTV…EEAAKYSKKN (454 aa). FAD contacts are provided by A162, E181, N189, A194, G195, G196, G303, and D369. G195 contacts fumarate. G195 is a succinate binding site. Y386 serves as a coordination point for heme c. H390, T402, and E403 together coordinate succinate. Fumarate contacts are provided by T402 and E403. R427 functions as the Proton donor in the catalytic mechanism. H529 serves as a coordination point for fumarate. A succinate-binding site is contributed by H529. 2 residues coordinate FAD: H530 and E559. Fumarate is bound by residues R569 and G572. Succinate-binding residues include R569 and G572. The FAD site is built by A574 and I575.

This sequence in the C-terminal section; belongs to the FAD-dependent oxidoreductase 2 family. FRD/SDH subfamily. Monomer. FAD is required as a cofactor. Requires heme c as cofactor.

It localises to the periplasm. The enzyme catalyses 2 Fe(III)-[cytochrome c] + succinate = fumarate + 2 Fe(II)-[cytochrome c] + 2 H(+). Mesaconic acid is a competitive inhibitor of fumarate reduction. Functionally, flavocytochrome that catalyzes the reduction of fumarate to succinate. Is essential for fumarate respiration during anaerobic growth, acting as the terminal reductase. Receives electrons from the membrane-bound tetraheme c-type cytochrome CymA. Is essentially unidirectional, catalyzing only fumarate reduction. Cannot reduce nitrite, dimethylsulphoxide, trimethylamine-N-oxide (TMAO) or sulfite. In vitro, can use the artificial electron donor methyl viologen. The protein is Fumarate reductase (cytochrome) of Shewanella frigidimarina (strain NCIMB 400).